The chain runs to 317 residues: tRNA dimethylallyltransferase (317 aa).

14-21 is a binding site for ATP; it reads GPTAVGKT. Position 16-21 (16-21) interacts with substrate; it reads TAVGKT. The interaction with substrate tRNA stretch occupies residues 39–42; it reads DSMQ.

This sequence belongs to the IPP transferase family. Monomer. It depends on Mg(2+) as a cofactor.

The enzyme catalyses adenosine(37) in tRNA + dimethylallyl diphosphate = N(6)-dimethylallyladenosine(37) in tRNA + diphosphate. Its function is as follows. Catalyzes the transfer of a dimethylallyl group onto the adenine at position 37 in tRNAs that read codons beginning with uridine, leading to the formation of N6-(dimethylallyl)adenosine (i(6)A). The chain is tRNA dimethylallyltransferase from Bacillus thuringiensis subsp. konkukian (strain 97-27).